We begin with the raw amino-acid sequence, 286 residues long: Expansin-like protein 1 (286 aa).

The N-terminal stretch at 1–21 is a signal peptide; that stretch reads MKTFVLFVILLCLTFLSISKS. Residues 22-265 lie on the Extracellular side of the membrane; it reads ETCPFSQSLV…TGASIGTPSD (244 aa). Residues 44–145 enclose the Expansin-like EG45 domain; that stretch reads AGNCGYENLM…YKVPCGVNGN (102 aa). 2 disulfide bridges follow: cysteine 47/cysteine 77 and cysteine 80/cysteine 140. Residues asparagine 82 and asparagine 89 are each glycosylated (N-linked (GlcNAc...) asparagine). A helical membrane pass occupies residues 266-286; it reads ASSLTLYALFSLTILFLVMLN.

This sequence belongs to the expansin family. Expansin A subfamily.

It is found in the membrane. May serve to lubricate the movement of the cellulose microfibrils during cell growth and wall extension and/or they may serve to maintain the fluid state of the slug cell wall. This chain is Expansin-like protein 1 (expl1), found in Dictyostelium discoideum (Social amoeba).